The following is a 578-amino-acid chain: Probable arginine--tRNA ligase, mitochondrial (578 aa).

A mitochondrion-targeting transit peptide spans 1–16; that stretch reads MACGFRRAIACQLSRV. L-arginine-binding positions include 133–135, His144, Tyr322, Asp326, and Gln350; that span reads SPN. A 'HIGH' region motif is present at residues 133–144; that stretch reads SPNVAKKFHVGH. Position 568 is an N6-acetyllysine (Lys568).

This sequence belongs to the class-I aminoacyl-tRNA synthetase family.

It localises to the mitochondrion membrane. It catalyses the reaction tRNA(Arg) + L-arginine + ATP = L-arginyl-tRNA(Arg) + AMP + diphosphate. In terms of biological role, catalyzes the attachment of arginine to tRNA(Arg) in a two-step reaction: arginine is first activated by ATP to form Arg-AMP and then transferred to the acceptor end of tRNA(Arg). This is Probable arginine--tRNA ligase, mitochondrial (RARS2) from Homo sapiens (Human).